Consider the following 774-residue polypeptide: Beta-xylosidase/alpha-L-arabinofuranosidase 2 (774 aa).

The first 33 residues, 1–33, serve as a signal peptide directing secretion; sequence MASVENRTPNVSVFLCFFVLFATLLLSGGRVSS. N-linked (GlcNAc...) asparagine glycosylation occurs at asparagine 136. Aspartate 303 is an active-site residue. Asparagine 437 carries N-linked (GlcNAc...) asparagine glycosylation.

Belongs to the glycoside hydrolase 3 family.

Its subcellular location is the secreted. It is found in the extracellular space. The protein localises to the extracellular matrix. The catalysed reaction is Hydrolysis of (1-&gt;4)-beta-D-xylans, to remove successive D-xylose residues from the non-reducing termini.. It carries out the reaction Hydrolysis of terminal non-reducing alpha-L-arabinofuranoside residues in alpha-L-arabinosides.. In terms of biological role, a bifunctional beta-xylosidase/alpha-L-arabinosidase, exo-enzyme that acts synergistically with endohydrolases. Releases xylose and arabinose from cell walls. The chain is Beta-xylosidase/alpha-L-arabinofuranosidase 2 from Medicago sativa subsp. varia (Alfalfa).